The chain runs to 480 residues: Glutamate--tRNA ligase (480 aa).

A 'HIGH' region motif is present at residues 21–31; sequence PSPTGYLHVGG. C110, C112, C137, and H139 together coordinate Zn(2+). Positions 248–252 match the 'KMSKS' region motif; the sequence is KLSKR. An ATP-binding site is contributed by K251.

It belongs to the class-I aminoacyl-tRNA synthetase family. Glutamate--tRNA ligase type 1 subfamily. As to quaternary structure, monomer. Zn(2+) serves as cofactor.

The protein resides in the cytoplasm. The catalysed reaction is tRNA(Glu) + L-glutamate + ATP = L-glutamyl-tRNA(Glu) + AMP + diphosphate. Its function is as follows. Catalyzes the attachment of glutamate to tRNA(Glu) in a two-step reaction: glutamate is first activated by ATP to form Glu-AMP and then transferred to the acceptor end of tRNA(Glu). This chain is Glutamate--tRNA ligase, found in Actinobacillus succinogenes (strain ATCC 55618 / DSM 22257 / CCUG 43843 / 130Z).